Here is a 180-residue protein sequence, read N- to C-terminus: Nucleoid-associated protein At4g30620, chloroplastic (180 aa).

The N-terminal 48 residues, 1–48, are a transit peptide targeting the chloroplast; it reads MASTATNTDFFKTLLSPFSNGNAAQRSSRQNIVWLNRKQSGNNNRSLR. Residues 45–65 form a disordered region; the sequence is RSLRVNGLFGGGKKDNKEDGQ. The span at 56–65 shows a compositional bias: basic and acidic residues; that stretch reads GKKDNKEDGQ.

The protein belongs to the YbaB/EbfC family. As to quaternary structure, homodimer. Binds to the translation initiation factors TIF3E1.

It localises to the plastid. The protein resides in the chloroplast. Its function is as follows. Binds to DNA and alters its conformation. May be involved in regulation of gene expression, nucleoid organization and DNA protection. The protein is Nucleoid-associated protein At4g30620, chloroplastic of Arabidopsis thaliana (Mouse-ear cress).